The chain runs to 393 residues: Epoxyqueuosine reductase (393 aa).

Asp154 serves as the catalytic Proton donor. Residues Leu196–Thr228 enclose the 4Fe-4S ferredoxin-type domain. [4Fe-4S] cluster contacts are provided by Cys208, Cys211, Cys214, Cys218, Cys234, Cys261, Cys264, and Cys268.

This sequence belongs to the QueG family. In terms of assembly, monomer. The cofactor is cob(II)alamin. [4Fe-4S] cluster is required as a cofactor.

The protein resides in the cytoplasm. The catalysed reaction is epoxyqueuosine(34) in tRNA + AH2 = queuosine(34) in tRNA + A + H2O. The protein operates within tRNA modification; tRNA-queuosine biosynthesis. Catalyzes the conversion of epoxyqueuosine (oQ) to queuosine (Q), which is a hypermodified base found in the wobble positions of tRNA(Asp), tRNA(Asn), tRNA(His) and tRNA(Tyr). This is Epoxyqueuosine reductase from Shewanella oneidensis (strain ATCC 700550 / JCM 31522 / CIP 106686 / LMG 19005 / NCIMB 14063 / MR-1).